A 325-amino-acid polypeptide reads, in one-letter code: UPF0164 protein TP_0856 (325 aa).

A signal peptide spans 1-28 (MVHYKSVFYKSAALVCGFVLAGASVAIA).

The protein belongs to the UPF0164 family.

This chain is UPF0164 protein TP_0856, found in Treponema pallidum (strain Nichols).